We begin with the raw amino-acid sequence, 437 residues long: Ribulose bisphosphate carboxylase/oxygenase activase, chloroplastic (437 aa).

A compositionally biased stretch (polar residues) spans 1–10 (MATAVSTIGS). Positions 1–26 (MATAVSTIGSVNRAPPNLNGSSSSAS) are disordered. Position 165 to 172 (165 to 172 (GGKGQGKS)) interacts with ATP.

This sequence belongs to the RuBisCO activase family.

Its subcellular location is the plastid. The protein resides in the chloroplast stroma. Activation of RuBisCO (ribulose-1,5-bisphosphate carboxylase/oxygenase; EC 4.1.1.39) involves the ATP-dependent carboxylation of the epsilon-amino group of lysine leading to a carbamate structure. In Malus domestica (Apple), this protein is Ribulose bisphosphate carboxylase/oxygenase activase, chloroplastic (RCA).